Consider the following 989-residue polypeptide: Cellulose synthase A catalytic subunit 4 [UDP-forming] (989 aa).

At 1 to 184 (MMESGVPPCA…SRIIPISKNK (184 aa)) the chain is on the cytoplasmic side. Residues Cys9, Cys12, Cys20, Cys23, Cys28, Cys31, Cys43, and Cys46 each coordinate Zn(2+). The segment at 9–47 (CAACGDDAHAACRACSYALCKACLDEDAAEGRTTCARCG) adopts an RING-type; degenerate zinc-finger fold. Positions 138–149 (KKEKKASAKKAA) are enriched in basic residues. The disordered stretch occupies residues 138 to 158 (KKEKKASAKKAAAKAQAPPVE). The chain crosses the membrane as a helical span at residues 185–205 (LTPYRAVIIMRLVVLGLFFHY). Over 206-213 (RITNPVYS) the chain is Extracellular. Residues 214–234 (AFGLWMTSVICEIWFGFSWIL) form a helical membrane-spanning segment. Over 235–772 (DQFPKWCPIN…INTIVYPFTS (538 aa)) the chain is Cytoplasmic. The UDP-alpha-D-glucose site is built by Ser272, Lys278, Glu279, and Asp308. Asp308 is an active-site residue. A coiled-coil region spans residues 362–389 (VKERRAMKRDYEEYKVRINALVAKAQKT). Lys449 is a UDP-alpha-D-glucose binding site. Mn(2+) contacts are provided by Lys450 and Asp474. Residue Asp688 is part of the active site. A helical transmembrane segment spans residues 773–793 (LPLIAYCCLPAICLLTGKFII). Over 794–798 (PTLSN) the chain is Extracellular. The chain crosses the membrane as a helical span at residues 799–819 (AATIWFLGLFISIIVTSVLEL). At 820-835 (RWSGIGIEDWWRNEQF) the chain is on the cytoplasmic side. Residues 836-856 (WVIGGVSAHLFAVFQGILKMI) form a helical membrane-spanning segment. Residues 857 to 884 (AGLDTNFTVTAKATDDTEFGELYVFKWT) lie on the Extracellular side of the membrane. Asn862 carries an N-linked (GlcNAc...) asparagine glycan. Residues 885–905 (TVLIPPTSILVLNLVGVVAGF) form a helical membrane-spanning segment. At 906–916 (SDALNSGYESW) the chain is on the cytoplasmic side. A helical transmembrane segment spans residues 917-937 (GPLFGKVFFAMWVIMHLYPFL). The Extracellular segment spans residues 938-946 (KGLMGRQNR). Residues 947 to 967 (TPTIVVLWSVLLASVFSLLWV) traverse the membrane as a helical segment. Residues 968 to 989 (KIDPFIGSSETTTTNSCANFDC) lie on the Cytoplasmic side of the membrane.

The protein belongs to the glycosyltransferase 2 family. Plant cellulose synthase subfamily. It depends on Mn(2+) as a cofactor. Zn(2+) serves as cofactor.

The protein localises to the cell membrane. The catalysed reaction is [(1-&gt;4)-beta-D-glucosyl](n) + UDP-alpha-D-glucose = [(1-&gt;4)-beta-D-glucosyl](n+1) + UDP + H(+). Its pathway is glycan metabolism; plant cellulose biosynthesis. In terms of biological role, catalytic subunit of cellulose synthase terminal complexes ('rosettes'), required for beta-1,4-glucan microfibril crystallization, a major mechanism of the cell wall formation. Involved in the secondary cell wall formation. The sequence is that of Cellulose synthase A catalytic subunit 4 [UDP-forming] (CESA4) from Oryza sativa subsp. indica (Rice).